A 349-amino-acid chain; its full sequence is Phenylalanine--tRNA ligase alpha subunit (349 aa).

Glutamate 261 lines the Mg(2+) pocket.

It belongs to the class-II aminoacyl-tRNA synthetase family. Phe-tRNA synthetase alpha subunit type 1 subfamily. In terms of assembly, tetramer of two alpha and two beta subunits. The cofactor is Mg(2+).

The protein localises to the cytoplasm. The enzyme catalyses tRNA(Phe) + L-phenylalanine + ATP = L-phenylalanyl-tRNA(Phe) + AMP + diphosphate + H(+). The chain is Phenylalanine--tRNA ligase alpha subunit from Leuconostoc citreum (strain KM20).